We begin with the raw amino-acid sequence, 229 residues long: MRFIIAFLMILNQGFSNLFSLPPEDIIFESSYEVAIKKAQKLNKNVLILVGRDIKENLIKDFLNSFTNGEIIHKVSRKSVFLVIDKDNEIFNKINLQKSPTIFFVDSKNEQIKAAYVGAVLSSVQFDKDFLNYVMGAIKSTSVLKKQKDYEINTADERTFFYKTLKGDWRLKFNGKDRKLVLFDTDLKEFLVFKDINENKLYAIPKSRIGNIYFSLLGNEEWKLFGKIK.

This is an uncharacterized protein from Borreliella burgdorferi (strain ATCC 35210 / DSM 4680 / CIP 102532 / B31) (Borrelia burgdorferi).